The chain runs to 565 residues: Urocanate hydratase (565 aa).

NAD(+) is bound by residues 58-59 (GG), Q136, 182-184 (GMG), E202, R207, 245-246 (NA), 266-270 (QTSAH), 276-277 (YL), and Y325. The active site involves C413. An NAD(+)-binding site is contributed by G495.

Belongs to the urocanase family. The cofactor is NAD(+).

It is found in the cytoplasm. It catalyses the reaction 4-imidazolone-5-propanoate = trans-urocanate + H2O. It functions in the pathway amino-acid degradation; L-histidine degradation into L-glutamate; N-formimidoyl-L-glutamate from L-histidine: step 2/3. Its function is as follows. Catalyzes the conversion of urocanate to 4-imidazolone-5-propionate. The protein is Urocanate hydratase of Vibrio vulnificus (strain YJ016).